Here is a 472-residue protein sequence, read N- to C-terminus: Ulvan lyase (472 aa).

The signal sequence occupies residues 1-21 (MIIKQYLLKISLCVLLLGCDS). Substrate contacts are provided by asparagine 46 and asparagine 109. Catalysis depends on histidine 110, which acts as the Proton donor. Substrate contacts are provided by lysine 112 and histidine 130. Residue tyrosine 175 is the Proton acceptor of the active site. Arginine 191, histidine 195, and tyrosine 233 together coordinate substrate. Histidine 195 contacts Zn(2+). Histidine 251, cysteine 253, and histidine 265 together coordinate Zn(2+). Position 265 (histidine 265) interacts with substrate.

Belongs to the polysaccharide lyase 25 family.

In terms of biological role, ulvan lyase involved in ulvan degradation. Ulvan is the main polysaccharide component of the Ulvales (green seaweed) cell wall. It is composed of disaccharide building blocks comprising 3-sulfated rhamnose (Rha3S) linked to D-glucuronic acid (GlcA), L-iduronic acid (IduA), or D-xylose (Xyl). Ulvan lyase catalyzes the endolytic cleavage of the glycosidic bond between Rha3S and the uronic acids GlcA or IduA, producing oligosaccharides that have unsaturated 4-deoxy-L-threo-hex-4-enopyranosiduronic acid (deltaUA) at the non-reducing end. This results eventually in the degradation of the ulvan polysaccharide into deltaUA-Rha3S disaccharides and deltaUA-Rha3S-Xyl-Rha3S tetrasaccharides. The chain is Ulvan lyase from Nonlabens ulvanivorans (Persicivirga ulvanivorans).